Here is a 197-residue protein sequence, read N- to C-terminus: Glycerol-3-phosphate acyltransferase (197 aa).

The next 6 helical transmembrane spans lie at 1 to 21 (MNIL…GFLI), 50 to 70 (WPAL…VKIA), 77 to 97 (GLIE…PIWL), 111 to 131 (MFLA…LIVL), 136 to 156 (FVSL…FFYL), and 157 to 177 (GNYM…VIWK).

Belongs to the PlsY family. Probably interacts with PlsX.

Its subcellular location is the cell inner membrane. The enzyme catalyses an acyl phosphate + sn-glycerol 3-phosphate = a 1-acyl-sn-glycero-3-phosphate + phosphate. It functions in the pathway lipid metabolism; phospholipid metabolism. Its function is as follows. Catalyzes the transfer of an acyl group from acyl-phosphate (acyl-PO(4)) to glycerol-3-phosphate (G3P) to form lysophosphatidic acid (LPA). This enzyme utilizes acyl-phosphate as fatty acyl donor, but not acyl-CoA or acyl-ACP. The polypeptide is Glycerol-3-phosphate acyltransferase (Prochlorococcus marinus (strain MIT 9312)).